The sequence spans 320 residues: N-acetylneuraminate lyase (320 aa).

Thr-51 and Thr-52 together coordinate aceneuramate. The Proton donor role is filled by Tyr-143. Lys-173 serves as the catalytic Schiff-base intermediate with substrate. Aceneuramate contacts are provided by Ser-175, Gly-199, Asp-201, Glu-202, and Ser-218.

It belongs to the DapA family. NanA subfamily. In terms of assembly, homotetramer. Isoform 2 is expressed in placenta, liver, kidney, pancreas, spleen, thymus, ovary, small intestine and peripheral blood leukocyte.

The protein resides in the cytoplasm. The catalysed reaction is aceneuramate = aldehydo-N-acetyl-D-mannosamine + pyruvate. It participates in amino-sugar metabolism; N-acetylneuraminate degradation. Its function is as follows. Catalyzes the cleavage of N-acetylneuraminic acid (sialic acid) to form pyruvate and N-acetylmannosamine via a Schiff base intermediate. It prevents sialic acids from being recycled and returning to the cell surface. Involved in the N-glycolylneuraminic acid (Neu5Gc) degradation pathway. Although human is not able to catalyze formation of Neu5Gc due to the inactive CMAHP enzyme, Neu5Gc is present in food and must be degraded. The sequence is that of N-acetylneuraminate lyase from Homo sapiens (Human).